We begin with the raw amino-acid sequence, 95 residues long: Defensin-1 (95 aa).

The signal sequence occupies residues 1-19 (MKIYFIVGLLFMAMVAIMA). Residues 20 to 43 (APVEDEFEPLEHFENEERADRHRR) constitute a propeptide that is removed on maturation. 3 disulfide bridges follow: Cys46–Cys74, Cys60–Cys79, and Cys64–Cys81. Position 94 is a phenylalanine amide (Phe94).

It is found in the secreted. In terms of biological role, found in royal jelly and in hemolymph, potent antibacterial protein against Gram-positive bacteria at low concentration. The sequence is that of Defensin-1 from Apis mellifera carnica (Carniolan honeybee).